The sequence spans 131 residues: MEETNRQKKIGGLLQKDLADILQNSLRESGRTGILISVSKVRVTTDLSIAKAYVSIFPSKHQEEVIKEINENKSQIKHEMAQRTRHQLRKMPDLSFYVDDSLEYIDGIEKSIKGKEDPVANPDLLDKRKKS.

This sequence belongs to the RbfA family. As to quaternary structure, monomer. Binds 30S ribosomal subunits, but not 50S ribosomal subunits or 70S ribosomes.

It is found in the cytoplasm. Its function is as follows. One of several proteins that assist in the late maturation steps of the functional core of the 30S ribosomal subunit. Associates with free 30S ribosomal subunits (but not with 30S subunits that are part of 70S ribosomes or polysomes). Required for efficient processing of 16S rRNA. May interact with the 5'-terminal helix region of 16S rRNA. In Christiangramia forsetii (strain DSM 17595 / CGMCC 1.15422 / KT0803) (Gramella forsetii), this protein is Ribosome-binding factor A.